The sequence spans 189 residues: UPF0301 protein Plut_0637 (189 aa).

This sequence belongs to the UPF0301 (AlgH) family.

In Chlorobium luteolum (strain DSM 273 / BCRC 81028 / 2530) (Pelodictyon luteolum), this protein is UPF0301 protein Plut_0637.